Consider the following 579-residue polypeptide: Mycobactin import ATP-binding/permease protein IrtB (579 aa).

Residues 1 to 25 (MIRTLLRLVPAEKRGAVAGYAVLTL) are Cytoplasmic-facing. Positions 21-299 (AVLTLLSVLL…IADLAPALET (279 aa)) constitute an ABC transmembrane type-1 domain. The chain crosses the membrane as a helical span at residues 26–46 (LSVLLRAVGAVLLIPLLAALF). The Periplasmic segment spans residues 47 to 48 (SD). A helical transmembrane segment spans residues 49–69 (TPSDAWLWLGWLTAVTLAGWV). Over 70–126 (TDTNTARLGFDLGFAVLSRTQHDMADRLPNVAMSWFTPDNTATARQAIAATGPELAG) the chain is Cytoplasmic. The next 2 membrane-spanning stretches (helical) occupy residues 127–147 (LVVNLLTPLIGAALLPAAIGV) and 148–168 (ALLFVSVPLGLAALAGVAVLF). Residues 169–241 (GALALSGRLS…RLLTMQIPGQ (73 aa)) lie on the Cytoplasmic side of the membrane. The helical transmembrane segment at 242–262 (VLFSLAGQVALIGFAGMAVWL) threads the bilayer. Residues 263-272 (TVRGQLGVPE) are Periplasmic-facing. The chain crosses the membrane as a helical span at residues 273–293 (AIALIVVLVRYLEPFAAIADL). Topologically, residues 294 to 579 (APALETTRAT…SEWAIGSTAR (286 aa)) are cytoplasmic. The ABC transporter domain occupies 332 to 565 (IEFDDVRFSY…GGRFAQFWAQ (234 aa)). Residue 364–371 (GPSGSGKT) coordinates ATP.

This sequence belongs to the ABC transporter superfamily. Siderophore-Fe(3+) uptake transporter (SIUT) (TC 3.A.1.21) family. As to quaternary structure, forms a heterodimer with IrtA.

The protein localises to the cell inner membrane. The ATPase activity of IrtAB is stimulated more than 38-fold in the presence of Fe-MBT, and more than 10-fold in the presence of Fe-cMBT. In terms of biological role, part of the ABC transporter complex IrtAB involved in the import of iron-bound mycobactin (Fe-MBT) and carboxymycobactin (Fe-cMBT). Has a preference for Fe-MBT over Fe-cMBT. Transmembrane domains (TMD) form a pore in the membrane and the ATP-binding domain (NBD) is responsible for energy generation. The polypeptide is Mycobactin import ATP-binding/permease protein IrtB (Mycolicibacterium thermoresistibile (strain ATCC 19527 / DSM 44167 / CIP 105390 / JCM 6362 / NCTC 10409 / 316) (Mycobacterium thermoresistibile)).